The following is a 449-amino-acid chain: UMP-CMP kinase 2, mitochondrial (449 aa).

The N-terminal 98 residues, 1 to 98 (MAFARRLLRG…VRAARLHQRL (98 aa)), are a transit peptide targeting the mitochondrion. ATP is bound at residue 259–266 (GLDATGKT). Residues 380–412 (EERLQRLQGRGMEKTREEAELEANSVFRQKVEM) adopt a coiled-coil conformation.

This sequence belongs to the thymidylate kinase family. High levels are observed in myeloid, lymphoid and mesenchymal tissues.

It localises to the mitochondrion. The enzyme catalyses CMP + ATP = CDP + ADP. It carries out the reaction dCMP + ATP = dCDP + ADP. It catalyses the reaction a 2'-deoxyribonucleoside 5'-diphosphate + ATP = a 2'-deoxyribonucleoside 5'-triphosphate + ADP. The catalysed reaction is a ribonucleoside 5'-diphosphate + ATP = a ribonucleoside 5'-triphosphate + ADP. Its function is as follows. Mitochondrial nucleotide monophosphate kinase needed for salvage dNTP synthesis that mediates immunomodulatory and antiviral activities through IFN-dependent and IFN-independent pathways. Restricts the replication of multiple viruses including flaviviruses or coronaviruses. Together with viperin/RSAD2 and ddhCTP, suppresses the replication of several coronaviruses through inhibition of the viral RNA-dependent RNA polymerase activities. Concerning flaviviruses, restricts RNA translation when localized to the mitochondria independently of its kinase activity. Is able to phosphorylate dUMP, dCMP, CMP, UMP and monophosphates of the pyrimidine nucleoside analogs ddC, dFdC, araC, BVDU and FdUrd with ATP as phosphate donor. Efficacy is highest for dUMP followed by dCMP while CMP and UMP are poor substrates. Controls therefore mitochondrial DNA synthesis by supplying required deoxyribonucleotides. CMPK2-dependent mitochondrial DNA synthesis is necessary for the production of oxidized mitochondrial DNA fragments after exposure to NLRP3 activators. In turn, cytosolic oxidized mtDNA associates with the NLRP3 inflammasome complex and is required for its activation. The protein is UMP-CMP kinase 2, mitochondrial (CMPK2) of Homo sapiens (Human).